The sequence spans 388 residues: Ferrochelatase (388 aa).

His-196 and Glu-277 together coordinate Fe cation.

It belongs to the ferrochelatase family.

The protein localises to the cytoplasm. It catalyses the reaction heme b + 2 H(+) = protoporphyrin IX + Fe(2+). The protein operates within porphyrin-containing compound metabolism; protoheme biosynthesis; protoheme from protoporphyrin-IX: step 1/1. Catalyzes the ferrous insertion into protoporphyrin IX. The polypeptide is Ferrochelatase (Nostoc sp. (strain PCC 7120 / SAG 25.82 / UTEX 2576)).